Reading from the N-terminus, the 609-residue chain is All-trans-retinol 13,14-reductase (609 aa).

Positions 1 to 21 (MWITALLLVVLLLVVVHRVYV) are cleaved as a signal peptide.

The protein belongs to the carotenoid/retinoid oxidoreductase family. CrtISO subfamily. NAD(+) serves as cofactor. Requires NADP(+) as cofactor. It depends on FAD as a cofactor. In terms of tissue distribution, highly expressed in liver, kidney and heart.

It is found in the endoplasmic reticulum membrane. It carries out the reaction all-trans-13,14-dihydroretinol + A = all-trans-retinol + AH2. Its function is as follows. Catalyzes the saturation of all-trans-retinol to all-trans-13,14-dihydroretinol. Does not exhibit any activity toward all-trans-retinoic acid, nor 9-cis, 11-cis or 13-cis-retinol isomers. May play a role in the metabolism of vitamin A. Independently of retinol conversion, may regulate liver metabolism upstream of MLXIPL/ChREBP. May play a role in adipocyte differentiation. The sequence is that of All-trans-retinol 13,14-reductase (Retsat) from Rattus norvegicus (Rat).